The primary structure comprises 329 residues: Peroxidase 17 (329 aa).

Positions 1–19 are cleaved as a signal peptide; it reads MSLLPHLILYLTLLTVVVT. 4 cysteine pairs are disulfide-bonded: Cys32-Cys112, Cys65-Cys70, Cys118-Cys315, and Cys197-Cys229. Catalysis depends on His63, which acts as the Proton acceptor. Ca(2+) contacts are provided by Asp64, Val67, Gly69, Asp71, and Ser73. Pro160 is a binding site for substrate. 2 N-linked (GlcNAc...) asparagine glycosylation sites follow: Asn165 and Asn177. Residue His190 coordinates heme b. Position 191 (Ser191) interacts with Ca(2+). N-linked (GlcNAc...) asparagine glycosylation is found at Asn206 and Asn236. Residues Asp242, Thr244, and Asp249 each coordinate Ca(2+).

This sequence belongs to the peroxidase family. Classical plant (class III) peroxidase subfamily. Heme b serves as cofactor. Ca(2+) is required as a cofactor.

The protein localises to the secreted. Its subcellular location is the vacuole. It carries out the reaction 2 a phenolic donor + H2O2 = 2 a phenolic radical donor + 2 H2O. Functionally, removal of H(2)O(2), oxidation of toxic reductants, biosynthesis and degradation of lignin, suberization, auxin catabolism, response to environmental stresses such as wounding, pathogen attack and oxidative stress. These functions might be dependent on each isozyme/isoform in each plant tissue. In Arabidopsis thaliana (Mouse-ear cress), this protein is Peroxidase 17 (PER17).